Consider the following 256-residue polypeptide: Ras-related protein Rab-26 (256 aa).

Residues 1-51 are disordered; sequence MSRKKTPKSKGASTPAASTLPTANGARPARSGTALSGPDAPPNGPLQPGRP. Over residues 12 to 23 the composition is skewed to low complexity; the sequence is ASTPAASTLPTA. GTP contacts are provided by S72, G73, V74, G75, K76, T77, C78, S95, and T96. Residue T77 coordinates Mg(2+). 2 consecutive short sequence motifs (switch) follow at residues 86-101 and 119-136; these read GAFL…GIDF and DTAG…YYRD. 2 residues coordinate Mg(2+): T96 and D119. Residues G122, N177, K178, D180, A208, and K209 each coordinate GTP. 2 S-geranylgeranyl cysteine lipidation sites follow: C253 and C254.

It belongs to the small GTPase superfamily. Rab family. As to quaternary structure, interacts with RIMS1. Interacts with ADRA2B. Requires Mg(2+) as cofactor. Predominantly expressed in brain.

The protein resides in the golgi apparatus membrane. The protein localises to the cytoplasmic vesicle. It is found in the secretory vesicle membrane. It catalyses the reaction GTP + H2O = GDP + phosphate + H(+). Its activity is regulated as follows. Regulated by guanine nucleotide exchange factors (GEFs) which promote the exchange of bound GDP for free GTP. Regulated by GTPase activating proteins (GAPs) which increase the GTP hydrolysis activity. Inhibited by GDP dissociation inhibitors (GDIs). Its function is as follows. The small GTPases Rab are key regulators of intracellular membrane trafficking, from the formation of transport vesicles to their fusion with membranes. Rabs cycle between an inactive GDP-bound form and an active GTP-bound form that is able to recruit to membranes different set of downstream effectors directly responsible for vesicle formation, movement, tethering and fusion. RAB26 mediates transport of ADRA2A and ADRA2B from the Golgi to the cell membrane. Plays a role in the maturation of zymogenic granules and in pepsinogen secretion in the stomach. Plays a role in the secretion of amylase from acinar granules in the parotid gland. The polypeptide is Ras-related protein Rab-26 (Homo sapiens (Human)).